The primary structure comprises 334 residues: MTMNQGTKQPVRVAVTGAAGQIGYSLLFRIAAGDMLGKDQPVILQLLEITPALKALAGVVMELRDCAFPLLADIVTSDDPLVAFKDADYALLVGAMPRKAGMERGDLLGANGGIFKPQGEALNKVASRDVKVLVVGNPANTNALIAQQNAPDLDPKQFTAMVRLDHNRAISQLAEKTGQPVSAIKNITIWGNHSSTQYPDLSQATVNGQPALDLVDREWYEKEYIPTVAKRGAAIIEARGASSAASAASAAIDHMRDWALGTPEGEWVSMAVPSDGSYGIPEGLIYGFPVRCRNGQYEIVQGLEISDFSRQKMDATAKELEEEREEVRRLGLVK.

17–23 (GAAGQIG) contacts NAD(+). Substrate contacts are provided by Arg-98 and Arg-104. NAD(+) contacts are provided by residues Asn-111, Gln-118, and 135-137 (VGN). Substrate-binding residues include Asn-137 and Arg-168. His-193 (proton acceptor) is an active-site residue.

The protein belongs to the LDH/MDH superfamily. MDH type 2 family.

It catalyses the reaction (S)-malate + NAD(+) = oxaloacetate + NADH + H(+). Its function is as follows. Catalyzes the reversible oxidation of malate to oxaloacetate. The chain is Malate dehydrogenase from Deinococcus geothermalis (strain DSM 11300 / CIP 105573 / AG-3a).